The primary structure comprises 141 residues: Ribosome-binding factor A (141 aa).

This sequence belongs to the RbfA family. In terms of assembly, monomer. Binds 30S ribosomal subunits, but not 50S ribosomal subunits or 70S ribosomes.

The protein localises to the cytoplasm. Its function is as follows. One of several proteins that assist in the late maturation steps of the functional core of the 30S ribosomal subunit. Associates with free 30S ribosomal subunits (but not with 30S subunits that are part of 70S ribosomes or polysomes). Required for efficient processing of 16S rRNA. May interact with the 5'-terminal helix region of 16S rRNA. The polypeptide is Ribosome-binding factor A (Afipia carboxidovorans (strain ATCC 49405 / DSM 1227 / KCTC 32145 / OM5) (Oligotropha carboxidovorans)).